Here is a 219-residue protein sequence, read N- to C-terminus: GTP-binding nuclear protein GSP1/CNR1 (219 aa).

S2 bears the N-acetylserine mark. At S2 the chain carries Phosphoserine. Residues 9–173 (EVPTFKLVLV…LWLARKLAGN (165 aa)) form the Small GTPase Ran-type domain. A GTP-binding site is contributed by 20-27 (DGGTGKTT). The interval 39–47 (KKYIATIGV) is switch-I. Residues G70, 124–127 (NKVD), and 152–154 (SAK) contribute to the GTP site. The tract at residues 70–86 (GQEKFGGLRDGYYINAQ) is switch-II.

It belongs to the small GTPase superfamily. Ran family. In terms of assembly, found in a nuclear export complex with RanGTP, exportin and pre-miRNA. Forms a complex with YRB1. Interacts with BUD5, CEX1, RRP12, SRM1, and DIS3/RRP44.

Its subcellular location is the nucleus. Its function is as follows. GTP-binding protein involved in nucleocytoplasmic transport. Required for the import of protein into the nucleus and also for RNA export. Essential for cell viability. By analogy with Ras, Ran may be activated when GTP is exchanged for bound GDP by RCC1 and inactivated when GTP is hydrolyzed by Ran upon activation by RanGAP1. This chain is GTP-binding nuclear protein GSP1/CNR1 (GSP1), found in Saccharomyces cerevisiae (strain ATCC 204508 / S288c) (Baker's yeast).